We begin with the raw amino-acid sequence, 436 residues long: Serine--tRNA ligase (436 aa).

Basic and acidic residues predominate over residues threonine 43–valine 55. Residues threonine 43–aspartate 68 form a disordered region. Residue threonine 237–glutamate 239 participates in L-serine binding. Residue arginine 268 to glutamate 270 participates in ATP binding. Glutamate 291 lines the L-serine pocket. Glutamate 355 to serine 358 lines the ATP pocket. Serine 390 provides a ligand contact to L-serine.

The protein belongs to the class-II aminoacyl-tRNA synthetase family. Type-1 seryl-tRNA synthetase subfamily. In terms of assembly, homodimer. The tRNA molecule binds across the dimer.

Its subcellular location is the cytoplasm. It carries out the reaction tRNA(Ser) + L-serine + ATP = L-seryl-tRNA(Ser) + AMP + diphosphate + H(+). The enzyme catalyses tRNA(Sec) + L-serine + ATP = L-seryl-tRNA(Sec) + AMP + diphosphate + H(+). The protein operates within aminoacyl-tRNA biosynthesis; selenocysteinyl-tRNA(Sec) biosynthesis; L-seryl-tRNA(Sec) from L-serine and tRNA(Sec): step 1/1. In terms of biological role, catalyzes the attachment of serine to tRNA(Ser). Is also able to aminoacylate tRNA(Sec) with serine, to form the misacylated tRNA L-seryl-tRNA(Sec), which will be further converted into selenocysteinyl-tRNA(Sec). The protein is Serine--tRNA ligase of Lactobacillus johnsonii (strain CNCM I-12250 / La1 / NCC 533).